A 343-amino-acid chain; its full sequence is UDP-N-acetylglucosamine--N-acetylmuramyl-(pentapeptide) pyrophosphoryl-undecaprenol N-acetylglucosamine transferase (343 aa).

Residues 10–12 (TGG), asparagine 113, serine 174, and glutamine 275 each bind UDP-N-acetyl-alpha-D-glucosamine.

This sequence belongs to the glycosyltransferase 28 family. MurG subfamily.

Its subcellular location is the cell membrane. The enzyme catalyses di-trans,octa-cis-undecaprenyl diphospho-N-acetyl-alpha-D-muramoyl-L-alanyl-D-glutamyl-meso-2,6-diaminopimeloyl-D-alanyl-D-alanine + UDP-N-acetyl-alpha-D-glucosamine = di-trans,octa-cis-undecaprenyl diphospho-[N-acetyl-alpha-D-glucosaminyl-(1-&gt;4)]-N-acetyl-alpha-D-muramoyl-L-alanyl-D-glutamyl-meso-2,6-diaminopimeloyl-D-alanyl-D-alanine + UDP + H(+). Its pathway is cell wall biogenesis; peptidoglycan biosynthesis. Its function is as follows. Cell wall formation. Catalyzes the transfer of a GlcNAc subunit on undecaprenyl-pyrophosphoryl-MurNAc-pentapeptide (lipid intermediate I) to form undecaprenyl-pyrophosphoryl-MurNAc-(pentapeptide)GlcNAc (lipid intermediate II). This chain is UDP-N-acetylglucosamine--N-acetylmuramyl-(pentapeptide) pyrophosphoryl-undecaprenol N-acetylglucosamine transferase, found in Wolbachia sp. subsp. Drosophila simulans (strain wRi).